Here is a 448-residue protein sequence, read N- to C-terminus: Exodeoxyribonuclease 7 large subunit (448 aa).

The protein belongs to the XseA family. Heterooligomer composed of large and small subunits.

Its subcellular location is the cytoplasm. The enzyme catalyses Exonucleolytic cleavage in either 5'- to 3'- or 3'- to 5'-direction to yield nucleoside 5'-phosphates.. In terms of biological role, bidirectionally degrades single-stranded DNA into large acid-insoluble oligonucleotides, which are then degraded further into small acid-soluble oligonucleotides. The sequence is that of Exodeoxyribonuclease 7 large subunit from Hamiltonella defensa subsp. Acyrthosiphon pisum (strain 5AT).